We begin with the raw amino-acid sequence, 379 residues long: Cytochrome b (379 aa).

Helical transmembrane passes span 34–54 (FGSL…LLAM), 78–99 (WLIR…YFHI), 114–134 (WNTG…GYVL), and 179–199 (FFAL…IHLT). Heme b is bound by residues H84 and H98. H183 and H197 together coordinate heme b. H202 is a binding site for a ubiquinone. The next 4 helical transmembrane spans lie at 227-247 (LKDI…TFFS), 289-309 (LGGV…PLLH), 321-341 (FSQV…WVGS), and 348-368 (FIAI…VLFP).

It belongs to the cytochrome b family. The cytochrome bc1 complex contains 11 subunits: 3 respiratory subunits (MT-CYB, CYC1 and UQCRFS1), 2 core proteins (UQCRC1 and UQCRC2) and 6 low-molecular weight proteins (UQCRH/QCR6, UQCRB/QCR7, UQCRQ/QCR8, UQCR10/QCR9, UQCR11/QCR10 and a cleavage product of UQCRFS1). This cytochrome bc1 complex then forms a dimer. Requires heme b as cofactor.

It localises to the mitochondrion inner membrane. Component of the ubiquinol-cytochrome c reductase complex (complex III or cytochrome b-c1 complex) that is part of the mitochondrial respiratory chain. The b-c1 complex mediates electron transfer from ubiquinol to cytochrome c. Contributes to the generation of a proton gradient across the mitochondrial membrane that is then used for ATP synthesis. The polypeptide is Cytochrome b (MT-CYB) (Apteryx australis (Southern brown kiwi)).